The primary structure comprises 183 residues: ATP synthase subunit delta (183 aa).

It belongs to the ATPase delta chain family. F-type ATPases have 2 components, F(1) - the catalytic core - and F(0) - the membrane proton channel. F(1) has five subunits: alpha(3), beta(3), gamma(1), delta(1), epsilon(1). F(0) has three main subunits: a(1), b(2) and c(10-14). The alpha and beta chains form an alternating ring which encloses part of the gamma chain. F(1) is attached to F(0) by a central stalk formed by the gamma and epsilon chains, while a peripheral stalk is formed by the delta and b chains.

It is found in the cell membrane. In terms of biological role, f(1)F(0) ATP synthase produces ATP from ADP in the presence of a proton or sodium gradient. F-type ATPases consist of two structural domains, F(1) containing the extramembraneous catalytic core and F(0) containing the membrane proton channel, linked together by a central stalk and a peripheral stalk. During catalysis, ATP synthesis in the catalytic domain of F(1) is coupled via a rotary mechanism of the central stalk subunits to proton translocation. Functionally, this protein is part of the stalk that links CF(0) to CF(1). It either transmits conformational changes from CF(0) to CF(1) or is implicated in proton conduction. The protein is ATP synthase subunit delta of Halalkalibacterium halodurans (strain ATCC BAA-125 / DSM 18197 / FERM 7344 / JCM 9153 / C-125) (Bacillus halodurans).